A 631-amino-acid polypeptide reads, in one-letter code: Chaperone protein HtpG (631 aa).

The a; substrate-binding stretch occupies residues 1–339; it reads MSAQKETLGF…SNDLPLNVSR (339 aa). The b stretch occupies residues 340–556; the sequence is EILQESKDID…EHDMSAHLER (217 aa). Residues 557-631 form a c region; sequence MLKAAGQKIE…INKLMLELSV (75 aa).

It belongs to the heat shock protein 90 family. As to quaternary structure, homodimer.

It is found in the cytoplasm. Its function is as follows. Molecular chaperone. Has ATPase activity. This chain is Chaperone protein HtpG, found in Chromobacterium violaceum (strain ATCC 12472 / DSM 30191 / JCM 1249 / CCUG 213 / NBRC 12614 / NCIMB 9131 / NCTC 9757 / MK).